The primary structure comprises 772 residues: MGTKFLALGLSLCLVLSSFYQVSCQDEGTGSLSTLDLIEHEYQTSVNSLQGNEAVDQTETSGQKNSTVSDNNTISLSLSEEPALETLKESVDTSAELGAVTDEVDKPSSMLDHIELEFEAHINELKEAGSDGINKVEESKDDEEAARRHKMLEAIEREFEAAHAGFEQLKTDDSAQGLDDEQSAKRQSMLDEIERDFEAATKGLEQLKADDLTGINDEEHAAKRQKMLEEIEREFEEATKGLEELRHSTSSTDDEAQSAKRQNMLDEIEREFEAATSGLKELKINAHTVKDDVDDKEQDAKRQSMLDAIEREFEAVTESFKQLEDIADNKAEGDDESAKRQSMLDEIEREFEAATNSLKQLNLDDFSEGDDSAESARRNSMLEAIEREFEAATKGLEELKANDSTGDKDDDEHVARRKIMLEAIEREFEAATKGLEELKNESEQAENKRNSMLEAFEREFEAATNAKANGENSAKNPSTISTTVQKSSGGYNAGLEGLLKPADGVCGCFNKDKDGLQADTDSSINIAEILAEESKLQGSGTSRLTTSLNNLVDTHRKETSSKVGSVLGSSSSVTSTTSESAATSESIESLKQTLRKLRGLSARDLVNHPNFDAIIAAGTRYEVLSSASIGYISLLAKYKTVIKEGLEASQRVQIAQTRAKLLKETAMEKQRTVDSVFAAAKTTAQRGDALHIRIVAIKKLLAKLEAEKVDVDSKFTSLTTSLSELLKEASQAYEEYHEAVHKAKDEQAAEEFAVETTKRAEHIWVEFLSSLN.

The N-terminal stretch at 1 to 24 (MGTKFLALGLSLCLVLSSFYQVSC) is a signal peptide. The disordered stretch occupies residues 49–72 (LQGNEAVDQTETSGQKNSTVSDNN). 10 EFE repeat repeats span residues 98 to 138 (GAVT…KVEE), 139 to 176 (SKDDEEAARRHKMLEAIEREFEAAHAGFEQLKTDDSAQ), 177 to 213 (GLDDEQSAKRQSMLDEIERDFEAATKGLEQLKADDLT), 214 to 251 (GINDEEHAAKRQKMLEEIEREFEEATKGLEELRHSTSS), 252 to 292 (TDDE…VKDD), 293 to 330 (VDDKEQDAKRQSMLDAIEREFEAVTESFKQLEDIADNK), 331 to 368 (AEGDDESAKRQSMLDEIEREFEAATNSLKQLNLDDFSE), 369 to 407 (GDDSAESARRNSMLEAIEREFEAATKGLEELKANDSTGD), 408 to 439 (KDDDEHVARRKIMLEAIEREFEAATKGLEELK), and 440 to 472 (NESEQAENKRNSMLEAFEREFEAATNAKANGEN). The tract at residues 98–472 (GAVTDEVDKP…ATNAKANGEN (375 aa)) is 10 X approximate EFE repeat. A coiled-coil region spans residues 187 to 476 (QSMLDEIERD…KANGENSAKN (290 aa)). 2 disordered regions span residues 465-487 (NAKANGENSAKNPSTISTTVQKS) and 555-585 (HRKETSSKVGSVLGSSSSVTSTTSESAATSE). A compositionally biased stretch (polar residues) spans 466-487 (AKANGENSAKNPSTISTTVQKS). The span at 561-585 (SKVGSVLGSSSSVTSTTSESAATSE) shows a compositional bias: low complexity. Residues 688–748 (DALHIRIVAI…AVHKAKDEQA (61 aa)) adopt a coiled-coil conformation.

Has no interaction with PYK10 and is not part of the PYK10 complex. Interacts directly or indirectly with MEB1 and MEB2. Expressed in roots. Detected in shoot apex.

It is found in the endoplasmic reticulum lumen. Functionally, responsible for the ER body formation. Regulates the number and shape of the ER bodies and the accumulation of PYK10 in ER bodies, but is not involved in the expression of PYK10. In Arabidopsis thaliana (Mouse-ear cress), this protein is TSA1-like protein (NAI2).